The sequence spans 231 residues: UPF0749 protein YlxW (231 aa).

The N-terminal stretch at 1–34 is a signal peptide; it reads MRGKSAVLLSLIMLIAGFLISFSFQMTKENNKSA. A coiled-coil region spans residues 44–94; the sequence is YALRDELLKQEKENKKFEKELYQKQNKVRQAENKLKKEKSEYYNVLEDTEK.

The protein belongs to the UPF0749 family.

Functionally, may be involved in cell division and sporulation. This chain is UPF0749 protein YlxW (ylxW), found in Bacillus subtilis (strain 168).